Consider the following 471-residue polypeptide: Glutamate--tRNA ligase (471 aa).

A 'HIGH' region motif is present at residues 9 to 19 (PSPTGYLHVGG). The Zn(2+) site is built by cysteine 98, cysteine 100, cysteine 125, and aspartate 127. Residues 237–241 (KLSKR) carry the 'KMSKS' region motif. Position 240 (lysine 240) interacts with ATP.

The protein belongs to the class-I aminoacyl-tRNA synthetase family. Glutamate--tRNA ligase type 1 subfamily. In terms of assembly, monomer. The cofactor is Zn(2+).

Its subcellular location is the cytoplasm. It carries out the reaction tRNA(Glu) + L-glutamate + ATP = L-glutamyl-tRNA(Glu) + AMP + diphosphate. Its function is as follows. Catalyzes the attachment of glutamate to tRNA(Glu) in a two-step reaction: glutamate is first activated by ATP to form Glu-AMP and then transferred to the acceptor end of tRNA(Glu). The sequence is that of Glutamate--tRNA ligase from Yersinia pestis.